The following is a 434-amino-acid chain: Histidinol dehydrogenase (434 aa).

3 residues coordinate NAD(+): Tyr-130, Gln-188, and Asn-211. The substrate site is built by Ser-237, Gln-259, and His-262. Zn(2+) is bound by residues Gln-259 and His-262. Catalysis depends on proton acceptor residues Glu-326 and His-327. The substrate site is built by His-327, Asp-360, Glu-414, and His-419. Asp-360 provides a ligand contact to Zn(2+). A Zn(2+)-binding site is contributed by His-419.

The protein belongs to the histidinol dehydrogenase family. As to quaternary structure, homodimer. Requires Zn(2+) as cofactor.

It catalyses the reaction L-histidinol + 2 NAD(+) + H2O = L-histidine + 2 NADH + 3 H(+). It functions in the pathway amino-acid biosynthesis; L-histidine biosynthesis; L-histidine from 5-phospho-alpha-D-ribose 1-diphosphate: step 9/9. Catalyzes the sequential NAD-dependent oxidations of L-histidinol to L-histidinaldehyde and then to L-histidine. This chain is Histidinol dehydrogenase, found in Escherichia coli O6:H1 (strain CFT073 / ATCC 700928 / UPEC).